We begin with the raw amino-acid sequence, 443 residues long: 23S rRNA (uracil(1939)-C(5))-methyltransferase RlmD (443 aa).

Residues 10-68 enclose the TRAM domain; sequence RVTTKQTLTVTVNSLDPFGQGVAHHQGKAIFIPGALPGEQAEIELTEQKRQYSRGKLKR. Residues Cys-81, Cys-87, Cys-90, and Cys-168 each coordinate [4Fe-4S] cluster. Residues Gln-271, Phe-300, Asn-305, Glu-321, Asn-348, and Asp-369 each coordinate S-adenosyl-L-methionine. Residue Cys-395 is the Nucleophile of the active site.

The protein belongs to the class I-like SAM-binding methyltransferase superfamily. RNA M5U methyltransferase family. RlmD subfamily.

The catalysed reaction is uridine(1939) in 23S rRNA + S-adenosyl-L-methionine = 5-methyluridine(1939) in 23S rRNA + S-adenosyl-L-homocysteine + H(+). Functionally, catalyzes the formation of 5-methyl-uridine at position 1939 (m5U1939) in 23S rRNA. The polypeptide is 23S rRNA (uracil(1939)-C(5))-methyltransferase RlmD (Yersinia enterocolitica serotype O:8 / biotype 1B (strain NCTC 13174 / 8081)).